The following is a 266-amino-acid chain: Agamous-like MADS-box protein AGL97 (266 aa).

The region spanning 3–63 (GVKRKIAIEK…SNSNAAFYSF (61 aa)) is the MADS-box domain. Residues 88–130 (WEDESLLKSENLEELREAMDSMSTMLRDLKELEKQRDHQTQTL) are a coiled coil.

In terms of assembly, interacts with AGL27 and AGL62.

The protein localises to the nucleus. Functionally, putative transcription factor. In Arabidopsis thaliana (Mouse-ear cress), this protein is Agamous-like MADS-box protein AGL97 (AGL97).